Here is a 206-residue protein sequence, read N- to C-terminus: Small ribosomal subunit protein uS4 (206 aa).

The 62-residue stretch at Ser-96 to Asn-157 folds into the S4 RNA-binding domain.

It belongs to the universal ribosomal protein uS4 family. In terms of assembly, part of the 30S ribosomal subunit. Contacts protein S5. The interaction surface between S4 and S5 is involved in control of translational fidelity.

In terms of biological role, one of the primary rRNA binding proteins, it binds directly to 16S rRNA where it nucleates assembly of the body of the 30S subunit. With S5 and S12 plays an important role in translational accuracy. In Chromohalobacter salexigens (strain ATCC BAA-138 / DSM 3043 / CIP 106854 / NCIMB 13768 / 1H11), this protein is Small ribosomal subunit protein uS4.